A 356-amino-acid polypeptide reads, in one-letter code: Probable butyrate kinase (356 aa).

It belongs to the acetokinase family.

The protein localises to the cytoplasm. It carries out the reaction butanoate + ATP = butanoyl phosphate + ADP. The sequence is that of Probable butyrate kinase from Clostridium perfringens (strain SM101 / Type A).